The chain runs to 626 residues: Chaperone protein DnaK (626 aa).

The residue at position 197 (T197) is a Phosphothreonine; by autocatalysis. 2 stretches are compositionally biased toward basic and acidic residues: residues 512–528 and 539–551; these read DAEA…EAVE and QTEK…GEKI. Disordered regions lie at residues 512 to 551 and 601 to 626; these read DAEA…GEKI and DQNA…AEVE.

The protein belongs to the heat shock protein 70 family.

Its function is as follows. Acts as a chaperone. In Campylobacter fetus subsp. fetus (strain 82-40), this protein is Chaperone protein DnaK.